Consider the following 78-residue polypeptide: Defensin-like protein 173 (78 aa).

Residues 1 to 23 form the signal peptide; it reads MAKAPSPLVFPIIFLIIFALVEP. Intrachain disulfides connect C27–C71, C34–C56, C40–C65, and C44–C67.

It belongs to the DEFL family.

The protein resides in the secreted. The protein is Defensin-like protein 173 (LCR63) of Arabidopsis thaliana (Mouse-ear cress).